A 505-amino-acid chain; its full sequence is tRNA (guanine(6)-N(2))-methyltransferase THUMP3 (505 aa).

Residues 145 to 182 are disordered; the sequence is KAKRRKANQSAGKEKADCGQGDKADEKDGKKKHASSTS. Positions 156 to 173 are enriched in basic and acidic residues; sequence GKEKADCGQGDKADEKDG. One can recognise a THUMP domain in the interval 171-287; that stretch reads KDGKKKHASS…DNEVIVAIAL (117 aa).

It belongs to the methyltransferase superfamily. As to quaternary structure, part of the heterodimeric THUMPD3-TRM112 methyltransferase complex; this complex forms an active tRNA methyltransferase, where TRMT112 acts as an activator of the catalytic subunit THUMPD3. In terms of tissue distribution, ubiquitously expressed. Abundantly expressed in the testis, also expressed in the brain, heart, kidney, liver, lung, muscle and spleen.

Its subcellular location is the cytoplasm. It carries out the reaction guanosine(6) in tRNA + S-adenosyl-L-methionine = N(2)-methylguanosine(6) in tRNA + S-adenosyl-L-homocysteine + H(+). The catalysed reaction is guanosine(7) in tRNA + S-adenosyl-L-methionine = N(2)-methylguanosine(7) in tRNA + S-adenosyl-L-homocysteine + H(+). Functionally, catalytic subunit of the THUMPD3-TRM112 methyltransferase complex, that specifically mediates the S-adenosyl-L-methionine-dependent N(2)-methylation of guanosine nucleotide at position 6 (m2G6) in tRNAs. This is one of the major tRNA (guanine-N(2))-methyltransferases. Also catalyzes the S-adenosyl-L-methionine-dependent N(2)-methylation of guanosine nucleotide at position 7 of tRNA(Trp). This chain is tRNA (guanine(6)-N(2))-methyltransferase THUMP3, found in Mus musculus (Mouse).